We begin with the raw amino-acid sequence, 224 residues long: Holliday junction branch migration complex subunit RuvA (224 aa).

Residues 1-67 (MISWLKGEKV…EDGTSLYGFI (67 aa)) are domain I. The domain II stretch occupies residues 68–146 (EVNQRDLFRE…RFTDNDKTIH (79 aa)). Residues 147 to 155 (ENKKGIEAN) form a flexible linker region. Positions 156–224 (QFSKYIDEIY…ILMKLSEKTT (69 aa)) are domain III.

This sequence belongs to the RuvA family. Homotetramer. Forms an RuvA(8)-RuvB(12)-Holliday junction (HJ) complex. HJ DNA is sandwiched between 2 RuvA tetramers; dsDNA enters through RuvA and exits via RuvB. An RuvB hexamer assembles on each DNA strand where it exits the tetramer. Each RuvB hexamer is contacted by two RuvA subunits (via domain III) on 2 adjacent RuvB subunits; this complex drives branch migration. In the full resolvosome a probable DNA-RuvA(4)-RuvB(12)-RuvC(2) complex forms which resolves the HJ.

It localises to the cytoplasm. Its function is as follows. The RuvA-RuvB-RuvC complex processes Holliday junction (HJ) DNA during genetic recombination and DNA repair, while the RuvA-RuvB complex plays an important role in the rescue of blocked DNA replication forks via replication fork reversal (RFR). RuvA specifically binds to HJ cruciform DNA, conferring on it an open structure. The RuvB hexamer acts as an ATP-dependent pump, pulling dsDNA into and through the RuvAB complex. HJ branch migration allows RuvC to scan DNA until it finds its consensus sequence, where it cleaves and resolves the cruciform DNA. The polypeptide is Holliday junction branch migration complex subunit RuvA (Prochlorococcus marinus (strain NATL1A)).